Reading from the N-terminus, the 481-residue chain is UDP-N-acetylmuramoyl-L-alanyl-D-glutamate--L-lysine ligase (481 aa).

Ser42 lines the UDP-N-acetyl-alpha-D-muramoyl-L-alanyl-D-glutamate pocket. Position 118 to 124 (118 to 124) interacts with ATP; that stretch reads GTKGKTT. UDP-N-acetyl-alpha-D-muramoyl-L-alanyl-D-glutamate-binding positions include Gln158, 160 to 161, Ser187, and Arg195; that span reads TT. Position 229 is an N6-carboxylysine (Lys229). The short motif at 404-407 is the L-lysine recognition motif element; it reads DDPN.

This sequence belongs to the MurCDEF family. MurE subfamily. Carboxylation is probably crucial for Mg(2+) binding and, consequently, for the gamma-phosphate positioning of ATP.

The protein localises to the cytoplasm. It carries out the reaction UDP-N-acetyl-alpha-D-muramoyl-L-alanyl-D-glutamate + L-lysine + ATP = UDP-N-acetyl-alpha-D-muramoyl-L-alanyl-gamma-D-glutamyl-L-lysine + ADP + phosphate + H(+). Its pathway is cell wall biogenesis; peptidoglycan biosynthesis. Catalyzes the addition of L-lysine to the nucleotide precursor UDP-N-acetylmuramoyl-L-alanyl-D-glutamate (UMAG) in the biosynthesis of bacterial cell-wall peptidoglycan. The chain is UDP-N-acetylmuramoyl-L-alanyl-D-glutamate--L-lysine ligase from Streptococcus pyogenes serotype M28 (strain MGAS6180).